The chain runs to 74 residues: ATP synthase subunit c (74 aa).

The next 2 helical transmembrane spans lie at 13-33 (ISVI…ASLI) and 51-71 (ILGF…AFLI).

Belongs to the ATPase C chain family. As to quaternary structure, F-type ATPases have 2 components, F(1) - the catalytic core - and F(0) - the membrane proton channel. F(1) has five subunits: alpha(3), beta(3), gamma(1), delta(1), epsilon(1). F(0) has three main subunits: a(1), b(2) and c(10-14). The alpha and beta chains form an alternating ring which encloses part of the gamma chain. F(1) is attached to F(0) by a central stalk formed by the gamma and epsilon chains, while a peripheral stalk is formed by the delta and b chains.

It localises to the cell inner membrane. Functionally, f(1)F(0) ATP synthase produces ATP from ADP in the presence of a proton or sodium gradient. F-type ATPases consist of two structural domains, F(1) containing the extramembraneous catalytic core and F(0) containing the membrane proton channel, linked together by a central stalk and a peripheral stalk. During catalysis, ATP synthesis in the catalytic domain of F(1) is coupled via a rotary mechanism of the central stalk subunits to proton translocation. Its function is as follows. Key component of the F(0) channel; it plays a direct role in translocation across the membrane. A homomeric c-ring of between 10-14 subunits forms the central stalk rotor element with the F(1) delta and epsilon subunits. This Granulibacter bethesdensis (strain ATCC BAA-1260 / CGDNIH1) protein is ATP synthase subunit c.